A 150-amino-acid chain; its full sequence is 3-hydroxyacyl-[acyl-carrier-protein] dehydratase FabZ (150 aa).

H51 is a catalytic residue.

Belongs to the thioester dehydratase family. FabZ subfamily.

The protein localises to the cytoplasm. The catalysed reaction is a (3R)-hydroxyacyl-[ACP] = a (2E)-enoyl-[ACP] + H2O. Its function is as follows. Involved in unsaturated fatty acids biosynthesis. Catalyzes the dehydration of short chain beta-hydroxyacyl-ACPs and long chain saturated and unsaturated beta-hydroxyacyl-ACPs. The polypeptide is 3-hydroxyacyl-[acyl-carrier-protein] dehydratase FabZ (Legionella pneumophila subsp. pneumophila (strain Philadelphia 1 / ATCC 33152 / DSM 7513)).